Consider the following 892-residue polypeptide: Exo-beta-D-glucosaminidase (892 aa).

The signal sequence occupies residues 1–18 (MLANAIAALLLGSGIASA). Positions 19 to 28 (AGHGSPLTSK) are excised as a propeptide. N-linked (GlcNAc...) asparagine glycosylation is found at N196, N336, and N440. D464 acts as the Proton donor in catalysis. E539 acts as the Nucleophile in catalysis. 4 N-linked (GlcNAc...) asparagine glycosylation sites follow: N557, N578, N689, and N825.

This sequence belongs to the glycosyl hydrolase 2 family. In terms of assembly, monomer.

It is found in the secreted. The protein resides in the extracellular space. The catalysed reaction is Hydrolysis of chitosan or chitosan oligosaccharides to remove successive D-glucosamine residues from the non-reducing termini.. Functionally, hydrolyzes chitosan and chitooligosaccharides with retention of anomeric configuration. Has no activity against beta-D-galactoside, beta-D-glucuronide, beta-D-mannoside, chitin, glycol chitosan, cellulose, N,N'-diacetylchitibiose and pNP-GlcNAc. The chain is Exo-beta-D-glucosaminidase from Hypocrea jecorina (Trichoderma reesei).